Reading from the N-terminus, the 309-residue chain is Ornithine carbamoyltransferase (309 aa).

Residues 56 to 59 (STRT), Gln83, Arg107, and 134 to 137 (HPCQ) contribute to the carbamoyl phosphate site. Residues Asn165, Asp223, and 227-228 (SM) each bind L-ornithine. Carbamoyl phosphate-binding positions include 263 to 264 (CL) and Arg291.

The protein belongs to the aspartate/ornithine carbamoyltransferase superfamily. OTCase family.

Its subcellular location is the cytoplasm. It catalyses the reaction carbamoyl phosphate + L-ornithine = L-citrulline + phosphate + H(+). It participates in amino-acid biosynthesis; L-arginine biosynthesis; L-arginine from L-ornithine and carbamoyl phosphate: step 1/3. Functionally, reversibly catalyzes the transfer of the carbamoyl group from carbamoyl phosphate (CP) to the N(epsilon) atom of ornithine (ORN) to produce L-citrulline. This chain is Ornithine carbamoyltransferase, found in Burkholderia lata (strain ATCC 17760 / DSM 23089 / LMG 22485 / NCIMB 9086 / R18194 / 383).